A 1023-amino-acid chain; its full sequence is Exportin-T (1023 aa).

This sequence belongs to the exportin family.

The protein localises to the nucleus. The protein resides in the cytoplasm. Functionally, tRNA nucleus export receptor which facilitates tRNA translocation across the nuclear pore complex. Involved in pre-tRNA splicing, probably by affecting the interaction of pre-tRNA with splicing endonuclease. The chain is Exportin-T (los1) from Sclerotinia sclerotiorum (strain ATCC 18683 / 1980 / Ss-1) (White mold).